The chain runs to 279 residues: Esterase CG5412 (279 aa).

Catalysis depends on charge relay system residues serine 133, aspartate 191, and histidine 218. The tract at residues 249 to 279 (QSGNASFVDSGAEDDNDAEVAAMTAELDESD) is disordered.

It belongs to the LovG family.

The chain is Esterase CG5412 from Drosophila melanogaster (Fruit fly).